A 172-amino-acid polypeptide reads, in one-letter code: Large ribosomal subunit protein uL10 (172 aa).

Belongs to the universal ribosomal protein uL10 family. As to quaternary structure, part of the ribosomal stalk of the 50S ribosomal subunit. The N-terminus interacts with L11 and the large rRNA to form the base of the stalk. The C-terminus forms an elongated spine to which L12 dimers bind in a sequential fashion forming a multimeric L10(L12)X complex.

Its function is as follows. Forms part of the ribosomal stalk, playing a central role in the interaction of the ribosome with GTP-bound translation factors. This Caulobacter vibrioides (strain ATCC 19089 / CIP 103742 / CB 15) (Caulobacter crescentus) protein is Large ribosomal subunit protein uL10 (rplJ).